The sequence spans 74 residues: Small ribosomal subunit protein bS18 (74 aa).

Belongs to the bacterial ribosomal protein bS18 family. In terms of assembly, part of the 30S ribosomal subunit. Forms a tight heterodimer with protein bS6.

In terms of biological role, binds as a heterodimer with protein bS6 to the central domain of the 16S rRNA, where it helps stabilize the platform of the 30S subunit. The protein is Small ribosomal subunit protein bS18 of Gloeobacter violaceus (strain ATCC 29082 / PCC 7421).